The sequence spans 429 residues: MTLQKPKGTQDILPQETVKWQYVENVARKTFKKYHYGEIRTPMFERYEVISRSVGDTTDIVTKEMYDFHDKGDRHITLRPEGTAPVVRSYVENKLFAPEVQKPVKVFYIGSMFRYERPQAGRLREFHQLGVECFGSNNPAIDAETIAMAYQLFNELGIKDVTLHLNSLGNKESRKAYRQALIDYLIPMKDKLSKDSQRRLEENPLRVLDSKEKEDKEAVENAPSILDYLDDDSQAHFQGVRDMLEVLDIPYVIDTNMVRGLDYYNHTIFEFITQVDKSELTLCAGGRYDSLVEYFGGPATAGFGFGLGLERLLLVIDKQKINLPVDNSLDVYIAVLGAAANSTALELIQAIRKQGFSAERDYLSRKIKAQFKSADVFKTKLIMTLGESEVETGQVAVKNNFTRQEIAVSFEEIKTDFASVFKQLGSDRP.

It belongs to the class-II aminoacyl-tRNA synthetase family. Homodimer.

The protein localises to the cytoplasm. It catalyses the reaction tRNA(His) + L-histidine + ATP = L-histidyl-tRNA(His) + AMP + diphosphate + H(+). This is Histidine--tRNA ligase from Streptococcus mutans serotype c (strain ATCC 700610 / UA159).